A 324-amino-acid polypeptide reads, in one-letter code: Arginase (324 aa).

Mn(2+) is bound by residues H115, D143, H145, and D147. Substrate is bound by residues 145–149 (HADIN), 156–158 (SGN), and D202. D249 and D251 together coordinate Mn(2+). 2 residues coordinate substrate: T263 and E294.

The protein belongs to the arginase family. As to quaternary structure, homotrimer. It depends on Mn(2+) as a cofactor.

It catalyses the reaction L-arginine + H2O = urea + L-ornithine. It functions in the pathway nitrogen metabolism; urea cycle; L-ornithine and urea from L-arginine: step 1/1. This is Arginase (agaA) from Emericella nidulans (strain FGSC A4 / ATCC 38163 / CBS 112.46 / NRRL 194 / M139) (Aspergillus nidulans).